The sequence spans 176 residues: Ribosome maturation factor RimM (176 aa).

A PRC barrel domain is found at 93–172 (EGEFFYFDVL…EILTKDAKSI (80 aa)).

The protein belongs to the RimM family. As to quaternary structure, binds ribosomal protein uS19.

It is found in the cytoplasm. Functionally, an accessory protein needed during the final step in the assembly of 30S ribosomal subunit, possibly for assembly of the head region. Essential for efficient processing of 16S rRNA. May be needed both before and after RbfA during the maturation of 16S rRNA. It has affinity for free ribosomal 30S subunits but not for 70S ribosomes. This chain is Ribosome maturation factor RimM, found in Campylobacter curvus (strain 525.92).